The primary structure comprises 438 residues: Serine hydroxymethyltransferase 1 (438 aa).

(6S)-5,6,7,8-tetrahydrofolate-binding positions include Leu130 and 134–136 (GHL). Lys239 is subject to N6-(pyridoxal phosphate)lysine.

It belongs to the SHMT family. In terms of assembly, homodimer. Requires pyridoxal 5'-phosphate as cofactor.

The protein resides in the cytoplasm. The catalysed reaction is (6R)-5,10-methylene-5,6,7,8-tetrahydrofolate + glycine + H2O = (6S)-5,6,7,8-tetrahydrofolate + L-serine. The protein operates within one-carbon metabolism; tetrahydrofolate interconversion. It functions in the pathway amino-acid biosynthesis; glycine biosynthesis; glycine from L-serine: step 1/1. In terms of biological role, catalyzes the reversible interconversion of serine and glycine with tetrahydrofolate (THF) serving as the one-carbon carrier. This reaction serves as the major source of one-carbon groups required for the biosynthesis of purines, thymidylate, methionine, and other important biomolecules. Also exhibits THF-independent aldolase activity toward beta-hydroxyamino acids, producing glycine and aldehydes, via a retro-aldol mechanism. Thus, is able to catalyze the cleavage of L-allo-threonine. This Mycobacterium tuberculosis (strain ATCC 25618 / H37Rv) protein is Serine hydroxymethyltransferase 1.